The chain runs to 215 residues: CASP-like protein 1E1 (215 aa).

Over 1 to 51 the chain is Cytoplasmic; the sequence is MESSRGKPGLNGSGGGAAAFDYSSRRGYYTGAGAALPPLAAGSRAPPVDPC. A helical transmembrane segment spans residues 52–72; the sequence is CVVLRVFVLLGTLASAVVMAA. The Extracellular portion of the chain corresponds to 73–103; sequence DRQSTTVQIAAGEELAPPLRVPVTAKWTYSS. Residues 104–124 traverse the membrane as a helical segment; it reads AFVYFVVANAMVFAFSAAALA. Topologically, residues 125–130 are cytoplasmic; the sequence is AVRRRS. Residues 131–151 form a helical membrane-spanning segment; it reads AVVPVMVGDLVAMALLFSAVG. At 152 to 185 the chain is on the extracellular side; sequence AAAQFGLLGERGNAHVRWAKVCDVYGPFCERAMA. The chain crosses the membrane as a helical span at residues 186–206; that stretch reads AVVVALIAAFADLVLLMLTIL. Residues 207–215 lie on the Cytoplasmic side of the membrane; sequence TIHKASSYY.

This sequence belongs to the Casparian strip membrane proteins (CASP) family. In terms of assembly, homodimer and heterodimers.

It is found in the cell membrane. The sequence is that of CASP-like protein 1E1 from Oryza sativa subsp. japonica (Rice).